Here is a 206-residue protein sequence, read N- to C-terminus: Urease accessory protein UreG (206 aa).

Residue 13-20 coordinates GTP; that stretch reads GPVGSGKT.

The protein belongs to the SIMIBI class G3E GTPase family. UreG subfamily. As to quaternary structure, homodimer. UreD, UreF and UreG form a complex that acts as a GTP-hydrolysis-dependent molecular chaperone, activating the urease apoprotein by helping to assemble the nickel containing metallocenter of UreC. The UreE protein probably delivers the nickel.

The protein localises to the cytoplasm. Facilitates the functional incorporation of the urease nickel metallocenter. This process requires GTP hydrolysis, probably effectuated by UreG. The protein is Urease accessory protein UreG of Haloquadratum walsbyi (strain DSM 16790 / HBSQ001).